We begin with the raw amino-acid sequence, 142 residues long: Large ribosomal subunit protein uL11 (142 aa).

This sequence belongs to the universal ribosomal protein uL11 family. As to quaternary structure, part of the ribosomal stalk of the 50S ribosomal subunit. Interacts with L10 and the large rRNA to form the base of the stalk. L10 forms an elongated spine to which L12 dimers bind in a sequential fashion forming a multimeric L10(L12)X complex. One or more lysine residues are methylated.

Its function is as follows. Forms part of the ribosomal stalk which helps the ribosome interact with GTP-bound translation factors. This is Large ribosomal subunit protein uL11 from Vesicomyosocius okutanii subsp. Calyptogena okutanii (strain HA).